The primary structure comprises 574 residues: Laccase-12 (574 aa).

Residues 1-27 form the signal peptide; that stretch reads MAAASSVLRCCLLVAALMTLSAMGAEA. 2 consecutive Plastocyanin-like domains span residues 35–151 and 161–314; these read DVQT…PPAG and EEVP…YDDP. The N-linked (GlcNAc...) asparagine glycan is linked to Asn81. Cu cation is bound by residues His85, His87, His130, and His132. N-linked (GlcNAc...) asparagine glycosylation is found at Asn173, Asn190, Asn206, Asn242, Asn302, Asn335, Asn342, Asn381, Asn388, Asn398, Asn434, Asn441, and Asn447. A Plastocyanin-like 3 domain is found at 424–558; it reads NFPYYPLNPF…KMAWLVLDGS (135 aa). Cu cation is bound by residues His475, His478, His480, His537, Cys538, His539, and His543.

It belongs to the multicopper oxidase family. It depends on Cu cation as a cofactor.

The protein localises to the secreted. It localises to the extracellular space. Its subcellular location is the apoplast. It carries out the reaction 4 hydroquinone + O2 = 4 benzosemiquinone + 2 H2O. Lignin degradation and detoxification of lignin-derived products. This is Laccase-12 (LAC12) from Oryza sativa subsp. japonica (Rice).